A 507-amino-acid polypeptide reads, in one-letter code: Histidine ammonia-lyase (507 aa).

The 5-imidazolinone (Ala-Gly) cross-link spans 141-143 (ASG). Position 142 is a 2,3-didehydroalanine (Ser) (serine 142).

It belongs to the PAL/histidase family. In terms of processing, contains an active site 4-methylidene-imidazol-5-one (MIO), which is formed autocatalytically by cyclization and dehydration of residues Ala-Ser-Gly.

It localises to the cytoplasm. The catalysed reaction is L-histidine = trans-urocanate + NH4(+). It participates in amino-acid degradation; L-histidine degradation into L-glutamate; N-formimidoyl-L-glutamate from L-histidine: step 1/3. The protein is Histidine ammonia-lyase of Burkholderia pseudomallei (strain 1106a).